A 220-amino-acid chain; its full sequence is Peptide methionine sulfoxide reductase MsrA (220 aa).

The active site involves cysteine 59.

Belongs to the MsrA Met sulfoxide reductase family.

It catalyses the reaction L-methionyl-[protein] + [thioredoxin]-disulfide + H2O = L-methionyl-(S)-S-oxide-[protein] + [thioredoxin]-dithiol. The catalysed reaction is [thioredoxin]-disulfide + L-methionine + H2O = L-methionine (S)-S-oxide + [thioredoxin]-dithiol. Its function is as follows. Has an important function as a repair enzyme for proteins that have been inactivated by oxidation. Catalyzes the reversible oxidation-reduction of methionine sulfoxide in proteins to methionine. The protein is Peptide methionine sulfoxide reductase MsrA of Corynebacterium kroppenstedtii (strain DSM 44385 / JCM 11950 / CIP 105744 / CCUG 35717).